The sequence spans 1176 residues: DNA-directed RNA polymerase subunit beta (1176 aa).

The span at Thr13–Val30 shows a compositional bias: polar residues. The interval Thr13–Asn35 is disordered.

The protein belongs to the RNA polymerase beta chain family. The RNAP catalytic core consists of 2 alpha, 1 beta, 1 beta' and 1 omega subunit. When a sigma factor is associated with the core the holoenzyme is formed, which can initiate transcription.

It catalyses the reaction RNA(n) + a ribonucleoside 5'-triphosphate = RNA(n+1) + diphosphate. Functionally, DNA-dependent RNA polymerase catalyzes the transcription of DNA into RNA using the four ribonucleoside triphosphates as substrates. This is DNA-directed RNA polymerase subunit beta from Mycobacterium marinum (strain ATCC BAA-535 / M).